The primary structure comprises 377 residues: tRNA(Met) cytidine acetate ligase (377 aa).

Residues 7-20 (VTEY…HLYH), Gly100, Asn153, and Arg178 contribute to the ATP site.

It belongs to the TmcAL family.

It localises to the cytoplasm. It catalyses the reaction cytidine(34) in elongator tRNA(Met) + acetate + ATP = N(4)-acetylcytidine(34) in elongator tRNA(Met) + AMP + diphosphate. In terms of biological role, catalyzes the formation of N(4)-acetylcytidine (ac(4)C) at the wobble position of elongator tRNA(Met), using acetate and ATP as substrates. First activates an acetate ion to form acetyladenylate (Ac-AMP) and then transfers the acetyl group to tRNA to form ac(4)C34. This is tRNA(Met) cytidine acetate ligase from Staphylococcus saprophyticus subsp. saprophyticus (strain ATCC 15305 / DSM 20229 / NCIMB 8711 / NCTC 7292 / S-41).